A 606-amino-acid polypeptide reads, in one-letter code: NADH-ubiquinone oxidoreductase chain 5 (606 aa).

The next 16 membrane-spanning stretches (helical) occupy residues 3–23, 35–55, 87–107, 117–137, 140–160, 171–191, 211–233, 241–261, 273–293, 301–320, 325–347, 366–386, 402–422, 457–477, 488–508, and 582–602; these read LFTS…LMSL, YVKT…LIFI, MIFT…SMWY, FFKY…ANNL, LFIG…WWYG, AILY…WFLF, LPLL…HPWL, TPVS…FLLI, MQTL…ICAL, IIAF…IGIN, AFLH…GSII, LPFT…TPFL, SYTN…TAVY, LLIG…PMTI, LTAL…SLMT, and GLIK…MLLF.

The protein belongs to the complex I subunit 5 family. Core subunit of respiratory chain NADH dehydrogenase (Complex I) which is composed of 45 different subunits.

The protein resides in the mitochondrion inner membrane. The catalysed reaction is a ubiquinone + NADH + 5 H(+)(in) = a ubiquinol + NAD(+) + 4 H(+)(out). Its function is as follows. Core subunit of the mitochondrial membrane respiratory chain NADH dehydrogenase (Complex I) which catalyzes electron transfer from NADH through the respiratory chain, using ubiquinone as an electron acceptor. Essential for the catalytic activity and assembly of complex I. The protein is NADH-ubiquinone oxidoreductase chain 5 (MT-ND5) of Pseudosoriculus fumidus (Taiwanese brown-toothed shrew).